Here is a 62-residue protein sequence, read N- to C-terminus: Metallothionein (62 aa).

Met-1 is modified (N-acetylmethionine). The tract at residues 1–30 (MDPQDCKCETGASCSCGTTCSCSNCKCTSC) is beta. Positions 6, 8, 14, 16, 20, 22, 25, 27, 30, 34, 35, 37, 38, 42, 45, 49, 51, 58, 60, and 61 each coordinate a divalent metal cation. Residues 31–62 (KKSCCSCCPAECSKCSQGCHCEKGSKKCSCCN) form an alpha region.

It belongs to the metallothionein superfamily. Type 1 family.

In terms of biological role, metallothioneins have a high content of cysteine residues that bind various heavy metals. This Xenopus laevis (African clawed frog) protein is Metallothionein (mt-a).